A 398-amino-acid polypeptide reads, in one-letter code: tRNA-specific 2-thiouridylase MnmA (398 aa).

ATP is bound by residues 19 to 26 and Leu-45; that span reads AMSGGVDS. Cys-113 functions as the Nucleophile in the catalytic mechanism. Cys-113 and Cys-210 form a disulfide bridge. Gly-137 serves as a coordination point for ATP. Residues 160–162 form an interaction with tRNA region; sequence RDQ. The Cysteine persulfide intermediate role is filled by Cys-210.

Belongs to the MnmA/TRMU family.

Its subcellular location is the cytoplasm. The enzyme catalyses S-sulfanyl-L-cysteinyl-[protein] + uridine(34) in tRNA + AH2 + ATP = 2-thiouridine(34) in tRNA + L-cysteinyl-[protein] + A + AMP + diphosphate + H(+). Functionally, catalyzes the 2-thiolation of uridine at the wobble position (U34) of tRNA, leading to the formation of s(2)U34. The protein is tRNA-specific 2-thiouridylase MnmA of Rhodopseudomonas palustris (strain HaA2).